A 671-amino-acid polypeptide reads, in one-letter code: UvrABC system protein B (671 aa).

The Helicase ATP-binding domain maps to glutamate 25–arginine 412. Glycine 38–threonine 45 provides a ligand contact to ATP. A Beta-hairpin motif is present at residues tyrosine 91–isoleucine 114. The Helicase C-terminal domain occupies glutamine 429–isoleucine 582. The segment at proline 601 to asparagine 623 is disordered. Residues alanine 614 to asparagine 623 show a composition bias toward basic and acidic residues. The UVR domain maps to threonine 632–arginine 667.

The protein belongs to the UvrB family. Forms a heterotetramer with UvrA during the search for lesions. Interacts with UvrC in an incision complex.

The protein resides in the cytoplasm. In terms of biological role, the UvrABC repair system catalyzes the recognition and processing of DNA lesions. A damage recognition complex composed of 2 UvrA and 2 UvrB subunits scans DNA for abnormalities. Upon binding of the UvrA(2)B(2) complex to a putative damaged site, the DNA wraps around one UvrB monomer. DNA wrap is dependent on ATP binding by UvrB and probably causes local melting of the DNA helix, facilitating insertion of UvrB beta-hairpin between the DNA strands. Then UvrB probes one DNA strand for the presence of a lesion. If a lesion is found the UvrA subunits dissociate and the UvrB-DNA preincision complex is formed. This complex is subsequently bound by UvrC and the second UvrB is released. If no lesion is found, the DNA wraps around the other UvrB subunit that will check the other stand for damage. This chain is UvrABC system protein B, found in Pseudomonas fluorescens (strain ATCC BAA-477 / NRRL B-23932 / Pf-5).